A 1273-amino-acid chain; its full sequence is Clustered mitochondria protein homolog (1273 aa).

The Clu domain maps to 344-599 (PANNADYSRM…NTYPLDVKFA (256 aa)). TPR repeat units follow at residues 981–1013 (SDQK…KEEV), 1022–1055 (AEKY…YERV), and 1151–1184 (ATLE…FTRE). Disordered regions lie at residues 1217–1242 (AEQA…KAEL) and 1254–1273 (IEGG…KGKK). The span at 1262–1273 (SKKKSSKKKGKK) shows a compositional bias: basic residues.

Belongs to the CLU family. May associate with the eukaryotic translation initiation factor 3 (eIF-3) complex.

The protein localises to the cytoplasm. MRNA-binding protein involved in proper cytoplasmic distribution of mitochondria. The polypeptide is Clustered mitochondria protein homolog (Vanderwaltozyma polyspora (strain ATCC 22028 / DSM 70294 / BCRC 21397 / CBS 2163 / NBRC 10782 / NRRL Y-8283 / UCD 57-17) (Kluyveromyces polysporus)).